A 152-amino-acid polypeptide reads, in one-letter code: Large ribosomal subunit protein bL9 (152 aa).

This sequence belongs to the bacterial ribosomal protein bL9 family.

Functionally, binds to the 23S rRNA. The sequence is that of Large ribosomal subunit protein bL9 from Prochlorococcus marinus (strain SARG / CCMP1375 / SS120).